A 68-amino-acid chain; its full sequence is Medusin-AS (68 aa).

The first 22 residues, 1-22, serve as a signal peptide directing secretion; it reads MAFLKKSLFLVLFLGLVSLSVC. The propeptide occupies 23–49; that stretch reads EEEKRESEEEKNEQEEDDRDERSEEKR. Positions 24–46 are disordered; sequence EEKRESEEEKNEQEEDDRDERSE. Over residues 31–41 the composition is skewed to acidic residues; it reads EEKNEQEEDDR. At Leu-67 the chain carries Leucine amide.

This sequence belongs to the frog skin active peptide (FSAP) family. Medusin subfamily. Expressed by the skin glands.

Its subcellular location is the secreted. Its function is as follows. Antimicrobial peptide active against Gram-positive bacteria and fungi but inactive against Gram-negative bacteria. Also inhibits growth of B.dendrobatidis zoospores at high concentrations. Shows anticancer activities. Shows hemolytic activity. The protein is Medusin-AS of Agalychnis spurrelli (Gliding leaf frog).